The chain runs to 403 residues: O-succinylhomoserine sulfhydrylase (403 aa).

The residue at position 219 (Lys-219) is an N6-(pyridoxal phosphate)lysine.

This sequence belongs to the trans-sulfuration enzymes family. MetZ subfamily. As to quaternary structure, homotetramer. It depends on pyridoxal 5'-phosphate as a cofactor.

The enzyme catalyses O-succinyl-L-homoserine + hydrogen sulfide = L-homocysteine + succinate. It functions in the pathway amino-acid biosynthesis; L-methionine biosynthesis via de novo pathway; L-homocysteine from O-succinyl-L-homoserine: step 1/1. In terms of biological role, catalyzes the formation of L-homocysteine from O-succinyl-L-homoserine (OSHS) and hydrogen sulfide. Cannot use the other activated form of L-homoserine, O-acetyl-L-homoserine, as a substrate. The protein is O-succinylhomoserine sulfhydrylase of Pseudomonas aeruginosa (strain ATCC 15692 / DSM 22644 / CIP 104116 / JCM 14847 / LMG 12228 / 1C / PRS 101 / PAO1).